We begin with the raw amino-acid sequence, 73 residues long: Mu-conotoxin PIIIA (73 aa).

The first 19 residues, 1–19 (MSKLGVLLTICLLLFPITA), serve as a signal peptide directing secretion. Positions 20–49 (LPMDGDQPADRLAERMQDNISSEEHPFEKR) are excised as a propeptide. Position 50 is a pyrrolidone carboxylic acid (Gln50). 6 disulfide bridges follow: Cys53–Cys65, Cys53–Cys70, Cys54–Cys70, Cys54–Cys71, Cys60–Cys65, and Cys60–Cys71. Pro57 carries the post-translational modification 4-hydroxyproline. Pro67 is subject to 4-hydroxyproline. Cys71 carries the post-translational modification Cysteine amide.

This sequence belongs to the conotoxin M superfamily. 3D-structure of 3 disulfide-bond connectivities isomers is described (PIIIA-1 (C1-C5, C2-C6, C3-C4), PIIIA-2 (C1-C4, C2-C5, C3-C6) and PIIIA-3 (C1-C2, C3-C4, C5-C6)). Only PIIIA-2 contains the cysteine connectivity described as typical for native mu-conotoxins. However, PIIIA-1 is more potent than PIIIA-2, suggesting another possible disulfid connectivity. For this reason, both connectivities have been indicated in features. In terms of tissue distribution, expressed by the venom duct.

It is found in the secreted. In terms of biological role, mu-conotoxins block voltage-gated sodium channels (Nav). This toxin potently blocks rNav1.4/SCN4A (IC(50)=36-41 nM). It also moderately blocks rNav1.1/SCN1A (IC(50)=120 nM), rNav1.2/SCN2A (IC(50)=620 nM), rNav1.3/SCN3A (IC(50)=3.2 uM), mNav1.6/SCN8A (IC(50)=100 nM). This inhibition is reversible. The block of Nav1.1, Nav1.2, and Nav1.6 is modified when beta-subunits are coexpressed with alpha subunits. Hence, blocks of channels containing the beta-1 and beta-3 subunits are more potent (compared to channels without beta subunits), whereas blocks of channels containing the beta-2 and beta-4 are less potent (compared to channels without beta subunits). In vivo, this peptide causes flaccid paralysis in both mice and fish. This Conus purpurascens (Purple cone) protein is Mu-conotoxin PIIIA.